The chain runs to 719 residues: Leucine-rich repeat and fibronectin type-III domain-containing protein 5 (719 aa).

Residues 1-17 (MEKILFYLFLIGIAVKA) form the signal peptide. The 34-residue stretch at 18-51 (QICPKRCVCQILSPNLATLCAKKGLLFVPPNIDR) folds into the LRRNT domain. Topologically, residues 18 to 529 (QICPKRCVCQ…MQSQFLGGTM (512 aa)) are extracellular. LRR repeat units follow at residues 52-73 (RTVE…DFAN), 76-97 (SLVD…AFAD), 100-121 (NLRA…MFSG), 124-145 (NLHH…AFDD), 148-169 (ALEE…AVEK), 172-193 (SLHT…TFSH), and 196-217 (KMTR…PLFQ). Asn73 is a glycosylation site (N-linked (GlcNAc...) asparagine). An LRRCT domain is found at 240 to 286 (NPLHCNCELLWLRRLSREDDLETCASPPLLTGRYFWSIPEEEFLCEP). The Ig-like domain maps to 287 to 373 (PLITRHTHEM…GEATQIVDLH (87 aa)). A disulfide bridge connects residues Cys308 and Cys357. 5 N-linked (GlcNAc...) asparagine glycosylation sites follow: Asn330, Asn339, Asn382, Asn406, and Asn452. The disordered stretch occupies residues 385 to 414 (NHIHEPDPGSSDISTSTKSGSNTSSSNGDT). A compositionally biased stretch (low complexity) spans 393–414 (GSSDISTSTKSGSNTSSSNGDT). A Fibronectin type-III domain is found at 414 to 503 (TKLSQDKIVV…ITSLTATRVV (90 aa)). Residues 530–550 (IIIIGGIIVASVLVFIIILMI) form a helical membrane-spanning segment. Residues 551 to 719 (RYKVCNNNGQ…VQETQRLELI (169 aa)) lie on the Cytoplasmic side of the membrane. Over residues 615–627 (ETCSSQDSSTTTS) the composition is skewed to low complexity. Residues 615–694 (ETCSSQDSST…SVTEGPTSKR (80 aa)) are disordered. Polar residues-rich tracts occupy residues 628–641 (ALPP…SVSQ) and 649–677 (TKPS…TALQ).

This sequence belongs to the LRFN family. As to quaternary structure, can form heteromeric complexes with LRFN1, LRFN2, LRFN3 and LFRN4. Able to form homomeric complexes across cell junctions, between adjacent cells. Does not interact with DLG1, DLG2, DLG3 and DLG4.

The protein localises to the membrane. Its function is as follows. Cell adhesion molecule that mediates homophilic cell-cell adhesion in a Ca(2+)-independent manner. Promotes neurite outgrowth in hippocampal neurons. In Homo sapiens (Human), this protein is Leucine-rich repeat and fibronectin type-III domain-containing protein 5 (LRFN5).